A 547-amino-acid chain; its full sequence is Chaperonin GroEL (547 aa).

Residues T30–P33, K51, D87–T91, G415, N479–A481, and D495 each bind ATP. The interval A524 to F547 is disordered. Gly residues predominate over residues A535 to F547.

It belongs to the chaperonin (HSP60) family. Forms a cylinder of 14 subunits composed of two heptameric rings stacked back-to-back. Interacts with the co-chaperonin GroES.

It localises to the cytoplasm. The enzyme catalyses ATP + H2O + a folded polypeptide = ADP + phosphate + an unfolded polypeptide.. Together with its co-chaperonin GroES, plays an essential role in assisting protein folding. The GroEL-GroES system forms a nano-cage that allows encapsulation of the non-native substrate proteins and provides a physical environment optimized to promote and accelerate protein folding. This is Chaperonin GroEL from Xylella fastidiosa (strain M23).